The chain runs to 910 residues: Leucine--tRNA ligase (910 aa).

The 'HIGH' region motif lies at Pro42–His52. The 'KMSKS' region signature appears at Thr658 to Ser662. Residue Lys661 participates in ATP binding.

Belongs to the class-I aminoacyl-tRNA synthetase family.

It is found in the cytoplasm. It carries out the reaction tRNA(Leu) + L-leucine + ATP = L-leucyl-tRNA(Leu) + AMP + diphosphate. In Acidovorax ebreus (strain TPSY) (Diaphorobacter sp. (strain TPSY)), this protein is Leucine--tRNA ligase.